A 271-amino-acid chain; its full sequence is Gasdermin bGSDM (271 aa).

Cys7 is lipidated: S-palmitoyl cysteine. The next 4 membrane-spanning stretches (beta stranded) occupy residues 74-90 (IAGT…GLSV), 102-120 (TLGV…FEFS), 168-185 (RINV…GLNL), and 194-210 (ANVK…TVSF).

The protein belongs to the bacterial gasdermin family. In terms of assembly, monomer. As to quaternary structure, forms large, homooligomeric ring-shaped pores when inserted in membranes. Post-translationally, palmitoylation helps stabilize the inactive state; may self palmitoylate. Palmitoylation plays a significant role in pore formation.

It is found in the cytoplasm. Its subcellular location is the cell inner membrane. With respect to regulation, the full-length protein before cleavage is inactive: intramolecular interactions between the N-terminal domain and the C-terminal region as well as the lipid modification, mediate autoinhibition. The pyroptosis-like-inducing activity is carried by the released N-terminal domain (Gasdermin bGSDM, N-terminus). In terms of biological role, involved in defense against bacteriophages. When this probable 4 gene operon (bGSDM-FE772_23060-FE772_23065-FE772_23070) is inserted into E.coli it provides nearly 100-fold protection against phages T5 and T6 and about 8-fold against phage T4. The operon without bGSDM no longer protects against phage. Cleavage of this precursor by its dedicated protease(s) releases the active moiety (gasdermin bGSDM, N-terminus) which inserts into membranes, forming pores and triggering cell death. Pore-forming protein that causes membrane permeabilization via a pyroptosis-like activity. Makes ring-like pores when released. This Lysobacter enzymogenes protein is Gasdermin bGSDM.